The primary structure comprises 288 residues: Probable aquaporin PIP2-2 (288 aa).

The segment at methionine 1–threonine 21 is disordered. 2 helical membrane-spanning segments follow: residues alanine 42–isoleucine 62 and glycine 81–cysteine 101. The NPA 1 motif lies at asparagine 111–alanine 113. 3 helical membrane-spanning segments follow: residues valine 130–phenylalanine 150, glycine 172–alanine 192, and isoleucine 204–isoleucine 224. Positions asparagine 232–alanine 234 match the NPA 2 motif. A helical transmembrane segment spans residues isoleucine 254–leucine 274.

This sequence belongs to the MIP/aquaporin (TC 1.A.8) family. PIP (TC 1.A.8.11) subfamily. Expressed in roots, leaves and anthers.

The protein resides in the cell membrane. Its function is as follows. Aquaporins facilitate the transport of water and small neutral solutes across cell membranes. This Oryza sativa subsp. japonica (Rice) protein is Probable aquaporin PIP2-2 (PIP2-2).